Consider the following 407-residue polypeptide: Na(+)-translocating NADH-quinone reductase subunit F (407 aa).

The chain crosses the membrane as a helical span at residues 3 to 23 (IILGVVMFTLIVLALTVMILF). The 95-residue stretch at 32-126 (GDITIDINED…NLKIELPEEI (95 aa)) folds into the 2Fe-2S ferredoxin-type domain. Residues cysteine 69, cysteine 75, cysteine 78, and cysteine 110 each coordinate [2Fe-2S] cluster. The region spanning 129-269 (VKKWECEVIS…SGPFGEFFAK (141 aa)) is the FAD-binding FR-type domain.

Belongs to the NqrF family. Composed of six subunits; NqrA, NqrB, NqrC, NqrD, NqrE and NqrF. Requires [2Fe-2S] cluster as cofactor. The cofactor is FAD.

It localises to the cell inner membrane. It catalyses the reaction a ubiquinone + n Na(+)(in) + NADH + H(+) = a ubiquinol + n Na(+)(out) + NAD(+). Its function is as follows. NQR complex catalyzes the reduction of ubiquinone-1 to ubiquinol by two successive reactions, coupled with the transport of Na(+) ions from the cytoplasm to the periplasm. The first step is catalyzed by NqrF, which accepts electrons from NADH and reduces ubiquinone-1 to ubisemiquinone by a one-electron transfer pathway. The polypeptide is Na(+)-translocating NADH-quinone reductase subunit F (Yersinia enterocolitica serotype O:8 / biotype 1B (strain NCTC 13174 / 8081)).